The chain runs to 396 residues: 1-deoxy-D-xylulose 5-phosphate reductoisomerase (396 aa).

NADPH is bound by residues T15, G16, S17, I18, G41, and N130. Position 131 (K131) interacts with 1-deoxy-D-xylulose 5-phosphate. Position 132 (E132) interacts with NADPH. Mn(2+) is bound at residue D155. Residues S156, E157, S181, and H204 each contribute to the 1-deoxy-D-xylulose 5-phosphate site. E157 serves as a coordination point for Mn(2+). Residue G210 participates in NADPH binding. Residues S217, N222, K223, and E226 each coordinate 1-deoxy-D-xylulose 5-phosphate. Residue E226 participates in Mn(2+) binding.

This sequence belongs to the DXR family. Mg(2+) is required as a cofactor. The cofactor is Mn(2+).

It carries out the reaction 2-C-methyl-D-erythritol 4-phosphate + NADP(+) = 1-deoxy-D-xylulose 5-phosphate + NADPH + H(+). Its pathway is isoprenoid biosynthesis; isopentenyl diphosphate biosynthesis via DXP pathway; isopentenyl diphosphate from 1-deoxy-D-xylulose 5-phosphate: step 1/6. Catalyzes the NADPH-dependent rearrangement and reduction of 1-deoxy-D-xylulose-5-phosphate (DXP) to 2-C-methyl-D-erythritol 4-phosphate (MEP). The polypeptide is 1-deoxy-D-xylulose 5-phosphate reductoisomerase (Bifidobacterium longum (strain NCC 2705)).